The sequence spans 224 residues: CRP-like cAMP-activated global transcriptional regulator (224 aa).

3',5'-cyclic AMP contacts are provided by residues Gly64–Thr70, Gly79–Ser82, Arg89–Thr90, Thr134–Asn135, Ile142–Phe143, and Glu178–Arg188. In terms of domain architecture, HTH crp-type spans Thr144–Glu217. Positions Gln177–Ala196 form a DNA-binding region, H-T-H motif.

In terms of assembly, homodimer.

Functionally, global transcriptional regulator that complexes with cAMP and binds to specific DNA promoter sites, causing DNA-bending, to regulate transcription. cAMP improves binding to specific DNA sequences, probably by altering protein conformation. Activates expression of whiB1. The polypeptide is CRP-like cAMP-activated global transcriptional regulator (Mycobacterium tuberculosis (strain CDC 1551 / Oshkosh)).